The chain runs to 226 residues: Protein YAE1 homolog (226 aa).

Residues 45–85 (GYRDGIDAGKAVTLQQGFNQGYKKGAEVILNYGRLRGTLSA) form a deca-GX3 motif; required for interaction with LTO1 region.

In terms of assembly, forms a complex with LTO1.

It is found in the cytoplasm. It localises to the nucleus. In terms of biological role, the complex LTO1:YAE1 functions as a target specific adapter that probably recruits apo-ABCE1 to the cytosolic iron-sulfur protein assembly (CIA) complex machinery. May be required for biogenesis of the large ribosomal subunit and initiation of translation. This chain is Protein YAE1 homolog, found in Homo sapiens (Human).